The chain runs to 189 residues: MSKPTREEATEAVRTLLKFIGEDPSREGLLQTPDRVINSYVEIFSGYGKDVAEILNTKFYETCNFQDFILLNIKFTSFCEHHILPFNGTVDIAYIPDNCIVGISKLARIVNIFARRLQIQEKMTVQIAESVQENLKPLGVAVKISAVHSCMSMRGVMQDNSVMNTMHYTGIFAEQQKYRHEFLNLTAKR.

3 residues coordinate Zn(2+): Cys79, His82, and Cys150.

This sequence belongs to the GTP cyclohydrolase I family. In terms of assembly, homomer.

The catalysed reaction is GTP + H2O = 7,8-dihydroneopterin 3'-triphosphate + formate + H(+). It functions in the pathway cofactor biosynthesis; 7,8-dihydroneopterin triphosphate biosynthesis; 7,8-dihydroneopterin triphosphate from GTP: step 1/1. In Rickettsia africae (strain ESF-5), this protein is GTP cyclohydrolase 1.